We begin with the raw amino-acid sequence, 161 residues long: ATP synthase subunit b 1 (161 aa).

A helical transmembrane segment spans residues 5 to 25; that stretch reads EFWVAVAFVIFCGIVWKAGGF.

Belongs to the ATPase B chain family. As to quaternary structure, F-type ATPases have 2 components, F(1) - the catalytic core - and F(0) - the membrane proton channel. F(1) has five subunits: alpha(3), beta(3), gamma(1), delta(1), epsilon(1). F(0) has three main subunits: a(1), b(2) and c(10-14). The alpha and beta chains form an alternating ring which encloses part of the gamma chain. F(1) is attached to F(0) by a central stalk formed by the gamma and epsilon chains, while a peripheral stalk is formed by the delta and b chains.

It localises to the cell inner membrane. In terms of biological role, f(1)F(0) ATP synthase produces ATP from ADP in the presence of a proton or sodium gradient. F-type ATPases consist of two structural domains, F(1) containing the extramembraneous catalytic core and F(0) containing the membrane proton channel, linked together by a central stalk and a peripheral stalk. During catalysis, ATP synthesis in the catalytic domain of F(1) is coupled via a rotary mechanism of the central stalk subunits to proton translocation. Component of the F(0) channel, it forms part of the peripheral stalk, linking F(1) to F(0). The chain is ATP synthase subunit b 1 from Methylobacterium sp. (strain 4-46).